The following is a 337-amino-acid chain: Outer membrane protein assembly factor BamC (337 aa).

A signal peptide spans 1–16 (MKKWLFPFAFVATLAG). Cysteine 17 carries N-palmitoyl cysteine lipidation. Cysteine 17 carries S-diacylglycerol cysteine lipidation.

The protein belongs to the BamC family. As to quaternary structure, part of the Bam complex.

Its subcellular location is the cell outer membrane. Its function is as follows. Part of the outer membrane protein assembly complex, which is involved in assembly and insertion of beta-barrel proteins into the outer membrane. The chain is Outer membrane protein assembly factor BamC from Pasteurella multocida (strain Pm70).